A 212-amino-acid polypeptide reads, in one-letter code: ATP phosphoribosyltransferase (212 aa).

It belongs to the ATP phosphoribosyltransferase family. Short subfamily. As to quaternary structure, heteromultimer composed of HisG and HisZ subunits.

Its subcellular location is the cytoplasm. It carries out the reaction 1-(5-phospho-beta-D-ribosyl)-ATP + diphosphate = 5-phospho-alpha-D-ribose 1-diphosphate + ATP. The protein operates within amino-acid biosynthesis; L-histidine biosynthesis; L-histidine from 5-phospho-alpha-D-ribose 1-diphosphate: step 1/9. In terms of biological role, catalyzes the condensation of ATP and 5-phosphoribose 1-diphosphate to form N'-(5'-phosphoribosyl)-ATP (PR-ATP). Has a crucial role in the pathway because the rate of histidine biosynthesis seems to be controlled primarily by regulation of HisG enzymatic activity. The polypeptide is ATP phosphoribosyltransferase (Prochlorococcus marinus (strain MIT 9312)).